Reading from the N-terminus, the 395-residue chain is Putative 8-amino-7-oxononanoate synthase (395 aa).

Arg-23 serves as a coordination point for substrate. A pyridoxal 5'-phosphate-binding site is contributed by 110–111 (GF). A substrate-binding site is contributed by His-135. Residues Ser-182, 207–210 (DEAH), and 239–242 (TFSK) each bind pyridoxal 5'-phosphate. An N6-(pyridoxal phosphate)lysine modification is found at Lys-242. Residue Thr-356 participates in substrate binding.

This sequence belongs to the class-II pyridoxal-phosphate-dependent aminotransferase family. BioF subfamily. Homodimer. Requires pyridoxal 5'-phosphate as cofactor.

The catalysed reaction is 6-carboxyhexanoyl-[ACP] + L-alanine + H(+) = (8S)-8-amino-7-oxononanoate + holo-[ACP] + CO2. Its pathway is cofactor biosynthesis; biotin biosynthesis. Functionally, catalyzes the decarboxylative condensation of pimeloyl-[acyl-carrier protein] and L-alanine to produce 8-amino-7-oxononanoate (AON), [acyl-carrier protein], and carbon dioxide. This chain is Putative 8-amino-7-oxononanoate synthase (bioF), found in Bacillus thuringiensis subsp. konkukian (strain 97-27).